The chain runs to 377 residues: MEASLSNHILNFSVDLYKRLKPSGKDTAGNVFCSPFSIAAALSMALAGARGNTAKQIAAILHSNDDKIHDHFSSFLCKLPSYAPDVALHIANRMYSEQTFHPKAEYTTLLQKSYDSTIKAVDFAGNADRVRLEVNAWVEEVTRSKIRDLLAPGTVDSSTSLILVNAIYFKGLWDSQFKPSATKPGDFHLTPQTSKKVDMMHQKGDFKMGHCSDLKVTALEIPYKGNKTSMVILLPEDVEGLSVLEEHLTAPKLSALLGGMYVTSDVNLRLPKFKLEQSIGLKDVLMAMGVKDFFTSLADLSGISAAGNLCASDIIHKAFVEVNEEGTEAAAATAIPIMLMCARFPQVVNFFVDRPFMFLIHSHDPDVVLFMGSIREL.

Residues asparagine 11 and asparagine 226 are each glycosylated (N-linked (GlcNAc...) asparagine).

The protein belongs to the serpin family. As to expression, female saliva (at protein level). Female salivary gland (at protein level).

The protein localises to the secreted. In terms of biological role, serine protease inhibitor with anticoagulant and immunosuppressive properties that can modulate blood feeding of ticks on vertebrate species. Strongly inhibits human leukocyte elastase (ELANE) and porcine pancreatic elastase. Moderately inhibits human tPA/tissue-type plasminogen activator (PLAT), coagulation factor Xa (F10), thrombin (F2) and trypsin. Does not inhibit human plasmin (PLG). Inhibits platelet aggregation. Inhibits the intrinsic pathway of blood coagulation in the host. Inhibits fibrinolysis in the host. Inhibits proliferation of mouse splenocytes. Decreases the number of IFN-gamma (IFNG)-producing human peripheral blood mononuclear cells (PBMCs) after stimulation with phytohemagglutinin A (PHA). Increases the number of IL10-producing human PBMCs after stimulation with lipopolysaccharides (LPS) with no significant effect on IL10 production. Inhibits production of IFNG, IL6, TNF-alpha (TNF) and CXCL8 by human PBMCs. Binds to monocyte/macrophage subpopulation of the host PBMCs. Increases both survival rate and survival time in mice with LPS-induced endotoxemic shock. This Ixodes ricinus (Common tick) protein is Iris.